Reading from the N-terminus, the 141-residue chain is Flagellar assembly factor FliW (141 aa).

The protein belongs to the FliW family. Interacts with translational regulator CsrA and flagellin(s).

Its subcellular location is the cytoplasm. Acts as an anti-CsrA protein, binds CsrA and prevents it from repressing translation of its target genes, one of which is flagellin. Binds to flagellin and participates in the assembly of the flagellum. The protein is Flagellar assembly factor FliW of Clostridium acetobutylicum (strain ATCC 824 / DSM 792 / JCM 1419 / IAM 19013 / LMG 5710 / NBRC 13948 / NRRL B-527 / VKM B-1787 / 2291 / W).